Here is a 368-residue protein sequence, read N- to C-terminus: C6 finger domain transcription factor tcpZ (368 aa).

Positions 30-56 (CDACHASKVRCSGEPICARCQRDNVAC) form a DNA-binding region, zn(2)-C6 fungal-type. The tract at residues 84–109 (FIEQRQRPAASQPPGHGTSRDSSVCA) is disordered.

The protein localises to the nucleus. Its function is as follows. Transcription factor that specifically regulates the thioclapurine biosynthesis gene cluster. In Claviceps purpurea (strain 20.1) (Ergot fungus), this protein is C6 finger domain transcription factor tcpZ.